The following is a 302-amino-acid chain: Sulfate adenylyltransferase subunit 2 (302 aa).

The protein belongs to the PAPS reductase family. CysD subfamily. As to quaternary structure, heterodimer composed of CysD, the smaller subunit, and CysN.

The catalysed reaction is sulfate + ATP + H(+) = adenosine 5'-phosphosulfate + diphosphate. Its pathway is sulfur metabolism; hydrogen sulfide biosynthesis; sulfite from sulfate: step 1/3. In terms of biological role, with CysN forms the ATP sulfurylase (ATPS) that catalyzes the adenylation of sulfate producing adenosine 5'-phosphosulfate (APS) and diphosphate, the first enzymatic step in sulfur assimilation pathway. APS synthesis involves the formation of a high-energy phosphoric-sulfuric acid anhydride bond driven by GTP hydrolysis by CysN coupled to ATP hydrolysis by CysD. The sequence is that of Sulfate adenylyltransferase subunit 2 from Parabacteroides distasonis (strain ATCC 8503 / DSM 20701 / CIP 104284 / JCM 5825 / NCTC 11152).